A 392-amino-acid chain; its full sequence is ATP phosphoribosyltransferase regulatory subunit (392 aa).

Belongs to the class-II aminoacyl-tRNA synthetase family. HisZ subfamily. As to quaternary structure, heteromultimer composed of HisG and HisZ subunits.

Its subcellular location is the cytoplasm. It functions in the pathway amino-acid biosynthesis; L-histidine biosynthesis; L-histidine from 5-phospho-alpha-D-ribose 1-diphosphate: step 1/9. In terms of biological role, required for the first step of histidine biosynthesis. May allow the feedback regulation of ATP phosphoribosyltransferase activity by histidine. The chain is ATP phosphoribosyltransferase regulatory subunit from Listeria monocytogenes serotype 4b (strain F2365).